Here is a 226-residue protein sequence, read N- to C-terminus: 3-dehydroquinate dehydratase (226 aa).

Residues Ser-9, 32-34 (EVR), and Arg-59 contribute to the 3-dehydroquinate site. Residue His-119 is the Proton donor/acceptor of the active site. Residue Lys-146 is the Schiff-base intermediate with substrate of the active site. 3-dehydroquinate-binding residues include Arg-187, Thr-208, and Gln-212.

The protein belongs to the type-I 3-dehydroquinase family. Homodimer.

The enzyme catalyses 3-dehydroquinate = 3-dehydroshikimate + H2O. Its pathway is metabolic intermediate biosynthesis; chorismate biosynthesis; chorismate from D-erythrose 4-phosphate and phosphoenolpyruvate: step 3/7. In terms of biological role, involved in the third step of the chorismate pathway, which leads to the biosynthesis of aromatic amino acids. Catalyzes the cis-dehydration of 3-dehydroquinate (DHQ) and introduces the first double bond of the aromatic ring to yield 3-dehydroshikimate. This chain is 3-dehydroquinate dehydratase, found in Desulfotalea psychrophila (strain LSv54 / DSM 12343).